The following is a 421-amino-acid chain: eIF5-mimic protein 1 (421 aa).

A disordered region spans residues 1-24 (MNTGKQQKPVLTGQRFKTRKRDEK). In terms of domain architecture, W2 spans 250-417 (TQQTLGTRKE…QNAEEESESE (168 aa)).

This sequence belongs to the BZW family.

The protein resides in the cytoplasm. Its function is as follows. Translation initiation regulator which may repress non-AUG initiated translation and repeat-associated non-AUG (RAN) initiated translation by acting as a competitive inhibitor of eukaryotic translation initiation factor 5 (EIF5) function. The polypeptide is eIF5-mimic protein 1 (bzw2) (Danio rerio (Zebrafish)).